The following is a 236-amino-acid chain: Small ribosomal subunit protein uS3 (236 aa).

The KH type-2 domain occupies 39–107 (VREFLKKKLA…PVHLNIEEVR (69 aa)). Residues 215-236 (AAQPAEPEKKVRKSGAKNAATS) form a disordered region.

The protein belongs to the universal ribosomal protein uS3 family. In terms of assembly, part of the 30S ribosomal subunit. Forms a tight complex with proteins S10 and S14.

Its function is as follows. Binds the lower part of the 30S subunit head. Binds mRNA in the 70S ribosome, positioning it for translation. This Methylobacillus flagellatus (strain ATCC 51484 / DSM 6875 / VKM B-1610 / KT) protein is Small ribosomal subunit protein uS3.